Here is a 104-residue protein sequence, read N- to C-terminus: L-rhamnose mutarotase (104 aa).

Tyrosine 18 provides a ligand contact to substrate. The active-site Proton donor is histidine 22. Substrate contacts are provided by residues tyrosine 41 and 76 to 77; that span reads WW.

This sequence belongs to the rhamnose mutarotase family. As to quaternary structure, homodimer.

It is found in the cytoplasm. It carries out the reaction alpha-L-rhamnose = beta-L-rhamnose. Its pathway is carbohydrate metabolism; L-rhamnose metabolism. Functionally, involved in the anomeric conversion of L-rhamnose. The chain is L-rhamnose mutarotase from Phocaeicola vulgatus (strain ATCC 8482 / DSM 1447 / JCM 5826 / CCUG 4940 / NBRC 14291 / NCTC 11154) (Bacteroides vulgatus).